Reading from the N-terminus, the 448-residue chain is Adenylosuccinate synthetase (448 aa).

GTP is bound by residues 22-28 (GDEGKGK) and 50-52 (GHT). Catalysis depends on Asp23, which acts as the Proton acceptor. Mg(2+) contacts are provided by Asp23 and Gly50. IMP-binding positions include 23-26 (DEGK), 48-51 (NAGH), Thr139, Arg153, Gln234, Thr249, and Arg321. Catalysis depends on His51, which acts as the Proton donor. 317–323 (SVTGRPR) contributes to the substrate binding site. GTP is bound by residues Arg323, 349–351 (KLD), and 431–433 (STG).

This sequence belongs to the adenylosuccinate synthetase family. As to quaternary structure, homodimer. Mg(2+) serves as cofactor.

Its subcellular location is the cytoplasm. The catalysed reaction is IMP + L-aspartate + GTP = N(6)-(1,2-dicarboxyethyl)-AMP + GDP + phosphate + 2 H(+). Its pathway is purine metabolism; AMP biosynthesis via de novo pathway; AMP from IMP: step 1/2. Functionally, plays an important role in the de novo pathway of purine nucleotide biosynthesis. Catalyzes the first committed step in the biosynthesis of AMP from IMP. This chain is Adenylosuccinate synthetase, found in Burkholderia mallei (strain NCTC 10247).